The primary structure comprises 502 residues: Glutamate--tRNA ligase (502 aa).

A 'HIGH' region motif is present at residues 12-22 (PSPTGYLHVGG). Positions 259–263 (KLSKR) match the 'KMSKS' region motif. ATP is bound at residue lysine 262.

The protein belongs to the class-I aminoacyl-tRNA synthetase family. Glutamate--tRNA ligase type 1 subfamily. As to quaternary structure, monomer.

It is found in the cytoplasm. The catalysed reaction is tRNA(Glu) + L-glutamate + ATP = L-glutamyl-tRNA(Glu) + AMP + diphosphate. Functionally, catalyzes the attachment of glutamate to tRNA(Glu) in a two-step reaction: glutamate is first activated by ATP to form Glu-AMP and then transferred to the acceptor end of tRNA(Glu). The chain is Glutamate--tRNA ligase from Chlorobium phaeobacteroides (strain DSM 266 / SMG 266 / 2430).